Consider the following 437-residue polypeptide: ATP-dependent protease ATPase subunit HslU (437 aa).

Residues Val-18, 60–65 (GCGKTE), Asp-250, Glu-315, and Arg-387 contribute to the ATP site.

It belongs to the ClpX chaperone family. HslU subfamily. In terms of assembly, a double ring-shaped homohexamer of HslV is capped on each side by a ring-shaped HslU homohexamer. The assembly of the HslU/HslV complex is dependent on binding of ATP.

It is found in the cytoplasm. In terms of biological role, ATPase subunit of a proteasome-like degradation complex; this subunit has chaperone activity. The binding of ATP and its subsequent hydrolysis by HslU are essential for unfolding of protein substrates subsequently hydrolyzed by HslV. HslU recognizes the N-terminal part of its protein substrates and unfolds these before they are guided to HslV for hydrolysis. The protein is ATP-dependent protease ATPase subunit HslU of Methylobacterium sp. (strain 4-46).